Consider the following 359-residue polypeptide: Methyltransferase fsa4 (359 aa).

Residues 198-199, Asp224, 248-249, Arg264, and Arg265 contribute to the S-adenosyl-L-methionine site; these read GG and SF.

It belongs to the class I-like SAM-binding methyltransferase superfamily. Cation-independent O-methyltransferase family.

The protein operates within mycotoxin biosynthesis. Functionally, methyltransferase; part of the gene cluster that mediates the biosynthesis of HIV-1 integrase inhibitor equisetin and of fusarisetin A, both trans-fused decalin-containing tetramic acids showing also antimicrobial activity. The PKS module of fsa1 together with the enoylreductase fsa3 catalyze the formation of the polyketide unit which is then conjugated to L-serine by the condensation domain of the fsa1 NRPS module. Activity of the Dieckmann cyclase domain (RED) results in release of the Dieckmann product intermediate. Diels-Alderase fsa2 is involved in endo-selective Diels-Alder cycloaddition to form the decalin ring, leading to the production of N-desmethylequisetin also called trichosetin. Subsequent N-methylation is carried out by fsa4 to give equisetin. The enzymatic gene responsible for the conversion of equisetin to fusarisetin A has not been identified yet and is probably located outside of the fsa cluster. This chain is Methyltransferase fsa4, found in Fusarium sp. (strain FN080326).